Here is a 464-residue protein sequence, read N- to C-terminus: Protein FAM90A14 (464 aa).

Disordered stretches follow at residues Met-1 to Leu-42, Pro-70 to Ala-389, and Ala-411 to Pro-437. 2 stretches are compositionally biased toward basic and acidic residues: residues Gly-74–Val-89 and Asn-97–Arg-114. A compositionally biased stretch (low complexity) spans Leu-180–Leu-197.

It belongs to the FAM90 family.

In Homo sapiens (Human), this protein is Protein FAM90A14.